The chain runs to 363 residues: Phospho-N-acetylmuramoyl-pentapeptide-transferase (363 aa).

Helical transmembrane passes span 4-24 (NLLV…NVIV), 28-48 (IAIL…IKYF), 72-92 (TPTM…LMLA), 96-116 (NIYV…GLID), 129-149 (INAT…CMIV), 169-189 (LTID…IGSS), 200-220 (GLVT…CYLA), 241-261 (ELTV…WYNI), 266-286 (IFMG…ISVI), 294-314 (GIIG…IYSI), and 342-362 (IVSR…SSLI).

This sequence belongs to the glycosyltransferase 4 family. MraY subfamily. It depends on Mg(2+) as a cofactor.

The protein localises to the cell inner membrane. The enzyme catalyses UDP-N-acetyl-alpha-D-muramoyl-L-alanyl-gamma-D-glutamyl-meso-2,6-diaminopimeloyl-D-alanyl-D-alanine + di-trans,octa-cis-undecaprenyl phosphate = di-trans,octa-cis-undecaprenyl diphospho-N-acetyl-alpha-D-muramoyl-L-alanyl-D-glutamyl-meso-2,6-diaminopimeloyl-D-alanyl-D-alanine + UMP. It functions in the pathway cell wall biogenesis; peptidoglycan biosynthesis. Functionally, catalyzes the initial step of the lipid cycle reactions in the biosynthesis of the cell wall peptidoglycan: transfers peptidoglycan precursor phospho-MurNAc-pentapeptide from UDP-MurNAc-pentapeptide onto the lipid carrier undecaprenyl phosphate, yielding undecaprenyl-pyrophosphoryl-MurNAc-pentapeptide, known as lipid I. In Orientia tsutsugamushi (strain Ikeda) (Rickettsia tsutsugamushi), this protein is Phospho-N-acetylmuramoyl-pentapeptide-transferase.